The following is an 81-amino-acid chain: Sulfur carrier protein TusA (81 aa).

Residue Cys19 is the Cysteine persulfide intermediate of the active site.

It belongs to the sulfur carrier protein TusA family.

The protein localises to the cytoplasm. Its function is as follows. Sulfur carrier protein which probably makes part of a sulfur-relay system. The protein is Sulfur carrier protein TusA of Aeromonas salmonicida (strain A449).